We begin with the raw amino-acid sequence, 674 residues long: DNA ligase (674 aa).

Residues 31-35, 80-81, and Glu110 contribute to the NAD(+) site; these read DYEYD and SL. Lys112 functions as the N6-AMP-lysine intermediate in the catalytic mechanism. NAD(+) is bound by residues Arg133, Glu167, Lys283, and Lys307. The Zn(2+) site is built by Cys401, Cys404, Cys419, and Cys424. One can recognise a BRCT domain in the interval 584–673; it reads KVEKIFEGMK…SKDEVKAVLE (90 aa).

It belongs to the NAD-dependent DNA ligase family. LigA subfamily. Mg(2+) is required as a cofactor. The cofactor is Mn(2+).

The enzyme catalyses NAD(+) + (deoxyribonucleotide)n-3'-hydroxyl + 5'-phospho-(deoxyribonucleotide)m = (deoxyribonucleotide)n+m + AMP + beta-nicotinamide D-nucleotide.. Functionally, DNA ligase that catalyzes the formation of phosphodiester linkages between 5'-phosphoryl and 3'-hydroxyl groups in double-stranded DNA using NAD as a coenzyme and as the energy source for the reaction. It is essential for DNA replication and repair of damaged DNA. The polypeptide is DNA ligase (Clostridioides difficile (strain 630) (Peptoclostridium difficile)).